We begin with the raw amino-acid sequence, 330 residues long: Ketol-acid reductoisomerase (NADP(+)) (330 aa).

Residues 1–181 (MNIYYEQDAD…GGTKAGVIET (181 aa)) enclose the KARI N-terminal Rossmann domain. Residues 24 to 27 (YGSQ), Lys-47, Ser-50, Ser-52, and 82 to 85 (DQTQ) each bind NADP(+). Residue His-107 is part of the active site. Gly-133 is an NADP(+) binding site. The 146-residue stretch at 182 to 327 (SFKDETETDL…AKLRGMMSWL (146 aa)) folds into the KARI C-terminal knotted domain. Mg(2+) is bound by residues Asp-190, Glu-194, Glu-226, and Glu-230. Ser-251 is a binding site for substrate.

This sequence belongs to the ketol-acid reductoisomerase family. The cofactor is Mg(2+).

It catalyses the reaction (2R)-2,3-dihydroxy-3-methylbutanoate + NADP(+) = (2S)-2-acetolactate + NADPH + H(+). It carries out the reaction (2R,3R)-2,3-dihydroxy-3-methylpentanoate + NADP(+) = (S)-2-ethyl-2-hydroxy-3-oxobutanoate + NADPH + H(+). It functions in the pathway amino-acid biosynthesis; L-isoleucine biosynthesis; L-isoleucine from 2-oxobutanoate: step 2/4. The protein operates within amino-acid biosynthesis; L-valine biosynthesis; L-valine from pyruvate: step 2/4. In terms of biological role, involved in the biosynthesis of branched-chain amino acids (BCAA). Catalyzes an alkyl-migration followed by a ketol-acid reduction of (S)-2-acetolactate (S2AL) to yield (R)-2,3-dihydroxy-isovalerate. In the isomerase reaction, S2AL is rearranged via a Mg-dependent methyl migration to produce 3-hydroxy-3-methyl-2-ketobutyrate (HMKB). In the reductase reaction, this 2-ketoacid undergoes a metal-dependent reduction by NADPH to yield (R)-2,3-dihydroxy-isovalerate. This chain is Ketol-acid reductoisomerase (NADP(+)), found in Chlorobaculum tepidum (strain ATCC 49652 / DSM 12025 / NBRC 103806 / TLS) (Chlorobium tepidum).